The following is a 108-amino-acid chain: Insulin-1 (108 aa).

The signal sequence occupies residues 1–24; that stretch reads MALLVHFLPLLALLALWEPKPTQA. 3 disulfides stabilise this stretch: C31–C94, C43–C107, and C93–C98. The propeptide at 57–85 is c peptide; the sequence is EVEDPQVEQLELGGSPGDLQTLALEVARQ.

This sequence belongs to the insulin family. As to quaternary structure, heterodimer of a B chain and an A chain linked by two disulfide bonds.

It is found in the secreted. In terms of biological role, insulin decreases blood glucose concentration. It increases cell permeability to monosaccharides, amino acids and fatty acids. It accelerates glycolysis, the pentose phosphate cycle, and glycogen synthesis in liver. The chain is Insulin-1 (Ins1) from Mus musculus (Mouse).